Consider the following 1155-residue polypeptide: Alpha,alpha-trehalose-phosphate synthase [UDP-forming] 1 (1155 aa).

The segment at Leu-56–Glu-94 is disordered. Over residues Ser-63–Ser-72 the composition is skewed to low complexity.

It in the N-terminal section; belongs to the glycosyltransferase 20 family. This sequence in the C-terminal section; belongs to the gob-1 trehalose phosphatase family.

The enzyme catalyses D-glucose 6-phosphate + UDP-alpha-D-glucose = alpha,alpha-trehalose 6-phosphate + UDP + H(+). In terms of biological role, catalyzes the production of trehalose from glucose-6-phosphate and UDP-alpha-D-glucose in a 2 step process. This is Alpha,alpha-trehalose-phosphate synthase [UDP-forming] 1 (tps-1) from Aphelenchoides avenae (Mycophagous nematode worm).